Here is a 484-residue protein sequence, read N- to C-terminus: MTLRSRLSGEAPQLWLLLLLASTASSLWASVAARTGPLHDKVVVCYVSTWAVYRPEQGAYAIENFDPNLCTHVVYAFAGLDITQAAIKSLDPWQDLKEEYGKGGYEKMTGLKRSHPHLKVSLAIGGWNEGSANYSTLVANNLLRGRFVKQVSSFIRKYNFDGLDLDWEYPTQRKGKPADRENFVLLTKELREEFDEHGLLLTSAIGASKKVIDEAYDVRQISRYLDYLHIMCYDYHGSWDRRVGYNAPLTAPADDPLSVKFSIDYLLKLGAPPEKLVMGLPFYGRTFKTLASGFLNDVSEGVGFKGPYTREDGFLGYNEICQTLSNQTSGWTREWDPQTSQVLAKSERNVFTQEINVVTYDSSRSIANKVLFAMSKRLAGVMVWSVDTDDFLGNCKLDEDTYEDFQKVTAAPKRSSQNYPLLRTINEATMLAVDELAVPEPQPDDSENEIPHGSIADRKNAGASMVSLGLGVTAVFMLLHRLAQ.

An N-terminal signal peptide occupies residues 1-33; the sequence is MTLRSRLSGEAPQLWLLLLLASTASSLWASVAA. Residues 41-432 enclose the GH18 domain; that stretch reads KVVVCYVSTW…RTINEATMLA (392 aa). Cys45 and Cys70 are disulfide-bonded. Chitin is bound by residues 98–99 and 125–128; these read EE and GGWN. The active-site Proton donor is Glu168. Residues Tyr169, 231–234, and Trp384 contribute to the chitin site; that span reads MCYD. Phosphoserine is present on Ser467.

This sequence belongs to the glycosyl hydrolase 18 family. Chitinase class II subfamily.

The catalysed reaction is Random endo-hydrolysis of N-acetyl-beta-D-glucosaminide (1-&gt;4)-beta-linkages in chitin and chitodextrins.. The polypeptide is Probable chitinase 2 (Drosophila melanogaster (Fruit fly)).